The primary structure comprises 389 residues: S-adenosylmethionine synthase (389 aa).

His15 provides a ligand contact to ATP. Asp17 is a binding site for Mg(2+). Glu43 is a binding site for K(+). L-methionine contacts are provided by Glu56 and Gln99. The flexible loop stretch occupies residues 99–109; sequence QSSDIQYSIDH. Residues 166–168, 232–233, Asp241, 247–248, Ser264, and Lys268 each bind ATP; these read DAK, RF, and RK. Residue Asp241 coordinates L-methionine. Lys272 provides a ligand contact to L-methionine.

Belongs to the AdoMet synthase family. As to quaternary structure, homotetramer; dimer of dimers. The cofactor is Mg(2+). K(+) is required as a cofactor.

It is found in the cytoplasm. It catalyses the reaction L-methionine + ATP + H2O = S-adenosyl-L-methionine + phosphate + diphosphate. It participates in amino-acid biosynthesis; S-adenosyl-L-methionine biosynthesis; S-adenosyl-L-methionine from L-methionine: step 1/1. Its function is as follows. Catalyzes the formation of S-adenosylmethionine (AdoMet) from methionine and ATP. The overall synthetic reaction is composed of two sequential steps, AdoMet formation and the subsequent tripolyphosphate hydrolysis which occurs prior to release of AdoMet from the enzyme. In Blochmanniella pennsylvanica (strain BPEN), this protein is S-adenosylmethionine synthase.